Reading from the N-terminus, the 197-residue chain is Dephospho-CoA kinase (197 aa).

Residues 2–197 (IIGITGGIAS…SALLLLANPR (196 aa)) enclose the DPCK domain. 10–15 (ASGKST) is an ATP binding site.

Belongs to the CoaE family.

It localises to the cytoplasm. It catalyses the reaction 3'-dephospho-CoA + ATP = ADP + CoA + H(+). Its pathway is cofactor biosynthesis; coenzyme A biosynthesis; CoA from (R)-pantothenate: step 5/5. Functionally, catalyzes the phosphorylation of the 3'-hydroxyl group of dephosphocoenzyme A to form coenzyme A. The polypeptide is Dephospho-CoA kinase (Streptococcus pyogenes serotype M1).